The following is a 124-amino-acid chain: Large ribosomal subunit protein bL12 (124 aa).

Residues 94–124 (APKPVKESVPKAAAEEAKKKLEEAGAKAEIK) form a disordered region.

Belongs to the bacterial ribosomal protein bL12 family. In terms of assembly, homodimer. Part of the ribosomal stalk of the 50S ribosomal subunit. Forms a multimeric L10(L12)X complex, where L10 forms an elongated spine to which 2 to 4 L12 dimers bind in a sequential fashion. Binds GTP-bound translation factors.

Its function is as follows. Forms part of the ribosomal stalk which helps the ribosome interact with GTP-bound translation factors. Is thus essential for accurate translation. The sequence is that of Large ribosomal subunit protein bL12 from Paraburkholderia phytofirmans (strain DSM 17436 / LMG 22146 / PsJN) (Burkholderia phytofirmans).